We begin with the raw amino-acid sequence, 1218 residues long: Coatomer subunit alpha-2 (1218 aa).

WD repeat units lie at residues 7–48, 49–88, 91–132, 133–172, 202–241, 246–285, 288–326, and 363–404; these read TKSN…DRFD, EHDG…CLFT, GHLD…AVLT, GHNH…KKSV, GHDR…AWEV, GHMN…GIQT, REHD…PAFS, and SLNQ…AGRA. A disordered region spans residues 855–876; that stretch reads MANGGDGFDAEEGEANEEDGEE. Positions 862–876 are enriched in acidic residues; the sequence is FDAEEGEANEEDGEE.

In terms of assembly, oligomeric complex that consists of at least the alpha, beta, beta', gamma, delta, epsilon and zeta subunits.

It localises to the cytoplasm. It is found in the golgi apparatus membrane. The protein resides in the cytoplasmic vesicle. The protein localises to the COPI-coated vesicle membrane. Functionally, the coatomer is a cytosolic protein complex that binds to dilysine motifs and reversibly associates with Golgi non-clathrin-coated vesicles, which further mediate biosynthetic protein transport from the ER, via the Golgi up to the trans Golgi network. Coatomer complex is required for budding from Golgi membranes, and is essential for the retrograde Golgi-to-ER transport of dilysine-tagged proteins. This Oryza sativa subsp. japonica (Rice) protein is Coatomer subunit alpha-2.